Here is a 406-residue protein sequence, read N- to C-terminus: MADGNEDARAEDMPGPAFEGYEAMELACPAERSGHVAVSDGRHMFVWGGYKSNQVRGLYDFYLPREELWIYNMETGRWKKINTEGDVPPSMSGSCAVCVDRVLYLFGGHHSRGNTNKFYMLDSRSADRVLQWERIDCQGIPPSSKDKLGVWVYKNKLIFFGGYGYLPEDKVLGTFEFDETSFWNSSHPRGWNDHVHILDTETFAWSQPITTGKAPSPRAAHACATVGNKGFVFGGRYRDARMNDLHYLNLDTWEWNELIPQGICPVGRSWHSLTPVSSDHLFLFGGFTTEKQPLSDAWTYCISKNEWIQFNHPYVEKPRLWHTACASDEGEVIVFGGCANNLLVHHRAAHSNEVLIFSVQPKSLVRLSLEAVICFKEMLANSWSCLPKHLLHSVNQRFGSNNTSGS.

6 Kelch repeats span residues 31–85, 92–136, 148–207, 221–259, 271–311, and 322–359; these read ERSG…NTEG, SGSC…ERID, LGVW…AWSQ, HACATVGNKGFVFGGRYRDARMNDLHYLNLDTWEWNELI, HSLT…IQFN, and HTACASDEGEVIVFGGCANNLLVHHRAAHSNEVLIFSV.

Component of a CRL2(KLHDC2) E3 ubiquitin-protein ligase complex, also named ECS(KLHDC2) complex, composed of CUL2, Elongin BC (ELOB and ELOC), RBX1 and substrate-specific adapter KLHDC2. May form oligomers as a KLHDC2-ELOB-ELOC complex; this interaction is autoinhibitory for the E3 ligase complex as the substrate-binding site of KLHDC2 is blocked in the oligomer. Interacts with CREB3; interaction is direct and specific as it does not interact with CREB1, ATF4, ATF6, JUN, FOS, CEBPA or herpes simplex virus transactivator VP16. Post-translationally, autoubiquitinated by the CRL2(KLHDC2) E3 ligase complex.

Its subcellular location is the nucleus. The protein operates within protein modification; protein ubiquitination. In terms of biological role, substrate-recognition component of a Cul2-RING (CRL2) E3 ubiquitin-protein ligase complex of the DesCEND (destruction via C-end degrons) pathway, which recognizes a C-degron located at the extreme C terminus of target proteins, leading to their ubiquitination and degradation. The C-degron recognized by the DesCEND pathway is usually a motif of less than ten residues and can be present in full-length proteins, truncated proteins or proteolytically cleaved forms. The CRL2(KLHDC2) complex specifically recognizes proteins with a diglycine (Gly-Gly) at the C-terminus, leading to their ubiquitination and degradation. The CRL2(KLHDC2) complex mediates ubiquitination and degradation of truncated SELENOK and SELENOS selenoproteins produced by failed UGA/Sec decoding, which end with a diglycine. The CRL2(KLHDC2) complex also recognizes proteolytically cleaved proteins ending with Gly-Gly, such as the N-terminal fragment of USP1, leading to their degradation. May also act as an indirect repressor of CREB3-mediated transcription by interfering with CREB3-DNA-binding. The polypeptide is Kelch domain-containing protein 2 (Rattus norvegicus (Rat)).